Consider the following 255-residue polypeptide: Myb-related protein Zm38 (255 aa).

HTH myb-type domains lie at 9–61 (KAHT…INYL) and 62–116 (RPDL…RRKL). 2 consecutive DNA-binding regions (H-T-H motif) follow at residues 37–61 (WRSL…INYL) and 89–112 (WSLI…NTHV).

The protein resides in the nucleus. Transcription factor that negatively regulates genes involved in anthocyanin biosynthesis. In Zea mays (Maize), this protein is Myb-related protein Zm38.